The chain runs to 422 residues: CRISPR-associated endodeoxyribonuclease Cas12f1 (422 aa).

The interval 1–126 is recognition domain (REC); that stretch reads MIKVYRYEIV…PSYKRDIPLD (126 aa). The tract at residues 127–211 is wedge domain (WED); sequence LIKENISVNR…YLNISYDFEP (85 aa). The interval 212 to 220 is linker; that stretch reads QTRVLDLNK. The tract at residues 221 to 370 is ruvC-I; sequence IMGIDLGVAV…IKIDPQYTSQ (150 aa). Catalysis depends on residues aspartate 225 and glutamate 324. Residues 371–399 are target nucleic acid-binding (TNB); sequence RCSECGNIDSGNRIGQAIFKCRACGYEAN. Zn(2+) is bound by residues cysteine 372, cysteine 375, cysteine 391, and cysteine 394. A ruvC-II region spans residues 400 to 420; it reads ADYNAARNIAIPNIDKIIAES. Residue aspartate 401 is part of the active site.

This sequence belongs to the CRISPR-associated endonuclease Cas12f family. As to quaternary structure, an asymmetric homodimer. Guide RNA is probably required for dimerization. It depends on Mg(2+) as a cofactor. Requires Zn(2+) as cofactor.

CRISPR (clustered regularly interspaced short palindromic repeat), is an adaptive immune system that provides protection against mobile genetic elements (viruses, transposable elements and conjugative plasmids). CRISPR clusters contain sequences complementary to antecedent mobile elements and target invading nucleic acids. CRISPR clusters are transcribed and processed into CRISPR RNA (crRNA), which requires a trans-encoded small RNA (tracrRNA), but not this protein. Recognizes a short motif in the CRISPR repeat sequences (the 5' PAM or protospacer adjacent motif, YTT in this organism) to help distinguish self versus nonself, as targets within the CRISPR locus do not have PAMs. Has dsDNA endonuclease activity upon expression in E.coli of this protein, a mini CRISPR array and the probable tracrRNA. Plasmid cleavage is centered around positions 19-24 base pairs 3' of PAM. The mini system protects E.coli against transformation by foreign plasmids. In Sulfoacidibacillus thermotolerans (Acidibacillus sulfuroxidans), this protein is CRISPR-associated endodeoxyribonuclease Cas12f1.